The primary structure comprises 667 residues: Transketolase 2 (667 aa).

Position 25 (His25) interacts with substrate. Residues His65 and 113-115 (GPL) each bind thiamine diphosphate. Asp154 serves as a coordination point for Mg(2+). Positions 155 and 184 each coordinate thiamine diphosphate. Positions 184 and 186 each coordinate Mg(2+). His260 provides a ligand contact to substrate. Residue His260 coordinates thiamine diphosphate. N6-acetyllysine is present on Lys342. The substrate site is built by Arg357 and Ser384. Catalysis depends on Glu410, which acts as the Proton donor. Phe436 is a binding site for thiamine diphosphate. His460, Asp468, and Arg519 together coordinate substrate.

The protein belongs to the transketolase family. As to quaternary structure, homodimer. It depends on Mg(2+) as a cofactor. The cofactor is Ca(2+). Mn(2+) is required as a cofactor. Co(2+) serves as cofactor. Requires thiamine diphosphate as cofactor.

The catalysed reaction is D-sedoheptulose 7-phosphate + D-glyceraldehyde 3-phosphate = aldehydo-D-ribose 5-phosphate + D-xylulose 5-phosphate. Functionally, catalyzes the reversible transfer of a two-carbon ketol group from sedoheptulose-7-phosphate to glyceraldehyde-3-phosphate, producing xylulose-5-phosphate and ribose-5-phosphate. Catalyzes the transfer of a two-carbon ketol group from a ketose donor to an aldose acceptor, via a covalent intermediate with the cofactor thiamine pyrophosphate. The protein is Transketolase 2 of Escherichia coli (strain K12).